We begin with the raw amino-acid sequence, 336 residues long: Tetraacyldisaccharide 4'-kinase (336 aa).

60–67 (TAGGNGKT) provides a ligand contact to ATP.

Belongs to the LpxK family.

It carries out the reaction a lipid A disaccharide + ATP = a lipid IVA + ADP + H(+). The protein operates within glycolipid biosynthesis; lipid IV(A) biosynthesis; lipid IV(A) from (3R)-3-hydroxytetradecanoyl-[acyl-carrier-protein] and UDP-N-acetyl-alpha-D-glucosamine: step 6/6. Functionally, transfers the gamma-phosphate of ATP to the 4'-position of a tetraacyldisaccharide 1-phosphate intermediate (termed DS-1-P) to form tetraacyldisaccharide 1,4'-bis-phosphate (lipid IVA). This chain is Tetraacyldisaccharide 4'-kinase, found in Vibrio cholerae serotype O1 (strain ATCC 39315 / El Tor Inaba N16961).